The following is a 363-amino-acid chain: MALLELRNVIRRFGDFTAVDNVSLSIQAGEFFTLLGPSGCGKTTLLRMIAGFDVPDSGQILLDGQDIANTPPEKRPIHTVFQSYALFPHMTVADNVAFPLKMSKVAPAEIKKRMEKALEEVQLSRFTHRFPHELSGGQKQRVAFARGLINRPRLLLMDEPLGALDAKLREDMQRELINLQKEVGITFIFVTHSQDEALALSQRIAVMNLGNIEQIGTPSAIYGTPANRFIADFIGKINLMEARVTQISNTAMTLEINGLGTTVLPPKKEIQAGDQGVIAIRPEQVAVHALAKQAEIPHAHTGKVLDFLYVGDVTTYVIELDSGIQIEALLANSSPGRARFFEVDDPVIVSWPQEAAQFLVDRP.

The region spanning 4 to 234 (LELRNVIRRF…PANRFIADFI (231 aa)) is the ABC transporter domain. 36 to 43 (GPSGCGKT) is an ATP binding site.

Belongs to the ABC transporter superfamily. Spermidine/putrescine importer (TC 3.A.1.11.1) family. As to quaternary structure, the complex is composed of two ATP-binding proteins (PotA), two transmembrane proteins (PotB and PotC) and a solute-binding protein (PotD).

The protein localises to the cell inner membrane. It carries out the reaction ATP + H2O + polyamine-[polyamine-binding protein]Side 1 = ADP + phosphate + polyamineSide 2 + [polyamine-binding protein]Side 1.. Functionally, part of the ABC transporter complex PotABCD involved in spermidine/putrescine import. Responsible for energy coupling to the transport system. This Nitrosomonas eutropha (strain DSM 101675 / C91 / Nm57) protein is Spermidine/putrescine import ATP-binding protein PotA.